A 221-amino-acid polypeptide reads, in one-letter code: Urease accessory protein UreF (221 aa).

It belongs to the UreF family. UreD, UreF and UreG form a complex that acts as a GTP-hydrolysis-dependent molecular chaperone, activating the urease apoprotein by helping to assemble the nickel containing metallocenter of UreC. The UreE protein probably delivers the nickel.

The protein resides in the cytoplasm. Its function is as follows. Required for maturation of urease via the functional incorporation of the urease nickel metallocenter. The polypeptide is Urease accessory protein UreF (Aliivibrio fischeri (strain MJ11) (Vibrio fischeri)).